The sequence spans 583 residues: DNA ligase (583 aa).

Glu249 is a binding site for ATP. The active-site N6-AMP-lysine intermediate is the Lys251. 6 residues coordinate ATP: Arg256, Arg271, Glu301, Phe341, Arg416, and Lys422.

This sequence belongs to the ATP-dependent DNA ligase family. Mg(2+) is required as a cofactor.

The catalysed reaction is ATP + (deoxyribonucleotide)n-3'-hydroxyl + 5'-phospho-(deoxyribonucleotide)m = (deoxyribonucleotide)n+m + AMP + diphosphate.. In terms of biological role, DNA ligase that seals nicks in double-stranded DNA during DNA replication, DNA recombination and DNA repair. This Pyrobaculum calidifontis (strain DSM 21063 / JCM 11548 / VA1) protein is DNA ligase.